Here is a 329-residue protein sequence, read N- to C-terminus: NADH-quinone oxidoreductase subunit H (329 aa).

A run of 9 helical transmembrane segments spans residues Leu9 to Ile29, Gly42 to Phe62, Phe75 to Ile95, Ile117 to Gly137, Ile154 to Val174, Gly188 to Ala208, Leu238 to Ile258, Trp269 to Trp291, and Trp309 to Ile329.

This sequence belongs to the complex I subunit 1 family. NDH-1 is composed of 14 different subunits. Subunits NuoA, H, J, K, L, M, N constitute the membrane sector of the complex.

The protein resides in the cell inner membrane. It carries out the reaction a quinone + NADH + 5 H(+)(in) = a quinol + NAD(+) + 4 H(+)(out). NDH-1 shuttles electrons from NADH, via FMN and iron-sulfur (Fe-S) centers, to quinones in the respiratory chain. The immediate electron acceptor for the enzyme in this species is believed to be ubiquinone. Couples the redox reaction to proton translocation (for every two electrons transferred, four hydrogen ions are translocated across the cytoplasmic membrane), and thus conserves the redox energy in a proton gradient. This subunit may bind ubiquinone. The sequence is that of NADH-quinone oxidoreductase subunit H from Helicobacter pylori (strain ATCC 700392 / 26695) (Campylobacter pylori).